We begin with the raw amino-acid sequence, 133 residues long: Small ribosomal subunit protein uS8 (133 aa).

Belongs to the universal ribosomal protein uS8 family. As to quaternary structure, part of the 30S ribosomal subunit. Contacts proteins S5 and S12.

Functionally, one of the primary rRNA binding proteins, it binds directly to 16S rRNA central domain where it helps coordinate assembly of the platform of the 30S subunit. This chain is Small ribosomal subunit protein uS8, found in Chlamydia felis (strain Fe/C-56) (Chlamydophila felis).